The sequence spans 288 residues: ATP synthase gamma chain (288 aa).

This sequence belongs to the ATPase gamma chain family. In terms of assembly, F-type ATPases have 2 components, CF(1) - the catalytic core - and CF(0) - the membrane proton channel. CF(1) has five subunits: alpha(3), beta(3), gamma(1), delta(1), epsilon(1). CF(0) has three main subunits: a, b and c.

The protein localises to the cell inner membrane. Produces ATP from ADP in the presence of a proton gradient across the membrane. The gamma chain is believed to be important in regulating ATPase activity and the flow of protons through the CF(0) complex. This is ATP synthase gamma chain from Trichlorobacter lovleyi (strain ATCC BAA-1151 / DSM 17278 / SZ) (Geobacter lovleyi).